Consider the following 324-residue polypeptide: Methionyl-tRNA formyltransferase (324 aa).

109-112 (SLLP) contacts (6S)-5,6,7,8-tetrahydrofolate. The tract at residues 305-324 (LHPGESFHKATQDNQGASET) is disordered.

It belongs to the Fmt family.

The catalysed reaction is L-methionyl-tRNA(fMet) + (6R)-10-formyltetrahydrofolate = N-formyl-L-methionyl-tRNA(fMet) + (6S)-5,6,7,8-tetrahydrofolate + H(+). In terms of biological role, attaches a formyl group to the free amino group of methionyl-tRNA(fMet). The formyl group appears to play a dual role in the initiator identity of N-formylmethionyl-tRNA by promoting its recognition by IF2 and preventing the misappropriation of this tRNA by the elongation apparatus. The sequence is that of Methionyl-tRNA formyltransferase from Nitrosomonas europaea (strain ATCC 19718 / CIP 103999 / KCTC 2705 / NBRC 14298).